Reading from the N-terminus, the 273-residue chain is 5-deoxy-glucuronate isomerase (273 aa).

It belongs to the isomerase IolB family.

It catalyses the reaction 5-deoxy-D-glucuronate = 5-dehydro-2-deoxy-D-gluconate. Its pathway is polyol metabolism; myo-inositol degradation into acetyl-CoA; acetyl-CoA from myo-inositol: step 4/7. Involved in the isomerization of 5-deoxy-glucuronate (5DG) to 5-dehydro-2-deoxy-D-gluconate (DKG or 2-deoxy-5-keto-D-gluconate). This chain is 5-deoxy-glucuronate isomerase, found in Listeria innocua serovar 6a (strain ATCC BAA-680 / CLIP 11262).